We begin with the raw amino-acid sequence, 466 residues long: Muscarinic acetylcholine receptor M2 (466 aa).

At 1 to 22 (MNNSTNSSNSGLALTSPYKTFE) the chain is on the extracellular side. Residues Asn-2, Asn-3, and Asn-6 are each glycosylated (N-linked (GlcNAc...) asparagine). A helical membrane pass occupies residues 23 to 45 (VVFIVLVAGSLSLVTIIGNILVM). The Cytoplasmic portion of the chain corresponds to 46-59 (VSIKVNRHLQTVNN). Residues 60–80 (YFLFSLACADLIIGVFSMNLY) form a helical membrane-spanning segment. Residues 81–97 (TLYTVIGYWPLGPVVCD) are Extracellular-facing. Cys-96 and Cys-176 form a disulfide bridge. A helical transmembrane segment spans residues 98 to 119 (LWLALDYVVSNASVMNLLIISF). The Important for signaling motif lies at 120 to 122 (DRY). Residues 120–139 (DRYFCVTKPLTYPVKRTTKM) lie on the Cytoplasmic side of the membrane. The helical transmembrane segment at 140–162 (AGMMIAAAWVLSFILWAPAILFW) threads the bilayer. Residues 163 to 184 (QFIVGVRTVEDGECYIQFFSNA) lie on the Extracellular side of the membrane. The helical transmembrane segment at 185–209 (AVTFGTAIAAFYLPVIIMTVLYWHI) threads the bilayer. The Cytoplasmic segment spans residues 210–387 (SRASKSRIKK…PPSREKKVTR (178 aa)). The tract at residues 218-320 (KKDKKEPVAN…SLGHSKDENS (103 aa)) is disordered. Ser-232 is subject to Phosphoserine. Residues 254–270 (ALEHNKIQNGKAPRDAV) are compositionally biased toward basic and acidic residues. Composition is skewed to polar residues over residues 284 to 293 (NDSTSVSAVA) and 304 to 313 (DENTVSTSLG). Residues 388 to 410 (TILAILLAFIITWAPYNVMVLIN) form a helical membrane-spanning segment. Residues 411 to 418 (TFCAPCIP) are Extracellular-facing. Residues Cys-413 and Cys-416 are joined by a disulfide bond. A helical membrane pass occupies residues 419-442 (NTVWTIGYWLCYINSTINPACYAL). Residues 436-440 (NPACY) carry the Important for signaling motif. The Cytoplasmic segment spans residues 443–466 (CNATFKKTFKHLLMCHYKNIGATR). 3 positions are modified to phosphothreonine: Thr-446, Thr-450, and Thr-465.

Belongs to the G-protein coupled receptor 1 family. Muscarinic acetylcholine receptor subfamily. CHRM2 sub-subfamily. In terms of assembly, interacts with ARRB1 and ARRB2. Interacts with RACK1; the interaction regulates CHRM2 internalization. Phosphorylated in response to agonist treatment.

The protein localises to the cell membrane. It localises to the postsynaptic cell membrane. The muscarinic acetylcholine receptor mediates various cellular responses, including inhibition of adenylate cyclase, breakdown of phosphoinositides and modulation of potassium channels through the action of G proteins. Primary transducing effect is adenylate cyclase inhibition. The sequence is that of Muscarinic acetylcholine receptor M2 (CHRM2) from Sus scrofa (Pig).